Consider the following 146-residue polypeptide: Leghemoglobin 2 (146 aa).

One can recognise a Globin domain in the interval 2-146 (GFTAQQDALV…LAAAIKKAMS (145 aa)). The residue at position 30 (tyrosine 30) is a Nitrated tyrosine. Residue serine 45 coordinates heme b. At serine 45 the chain carries Phosphoserine. Histidine 61 provides a ligand contact to O2. Residues lysine 64, histidine 93, and lysine 96 each coordinate heme b. Tyrosine 134 bears the Nitrated tyrosine mark.

This sequence belongs to the plant globin family. Monomer. Post-translationally, nitrated in effective nodules and particularly in hypoxic conditions; this mechanism may play a protective role in the symbiosis by buffering toxic peroxynitrite NO(2)(-). Nitration level decrease during nodule senescence. Phosphorylation at Ser-45 disrupts the molecular environment of its porphyrin ring oxygen binding pocket, thus leading to a reduced oxygen consumption and to the delivery of oxygen O(2) to symbiosomes. As to expression, specifically and strongly expressed in root nodules and at low levels in seedlings.

It is found in the cytoplasm. Its subcellular location is the cytosol. The protein localises to the nucleus. In terms of biological role, leghemoglobin that reversibly binds oxygen O(2) through a pentacoordinated heme iron. In root nodules, facilitates the diffusion of oxygen to the bacteroids while preventing the bacterial nitrogenase from being inactivated by buffering dioxygen, nitric oxide and carbon monoxide, and promoting the formation of reactive oxygen species (ROS, e.g. H(2)O(2)). This role is essential for symbiotic nitrogen fixation (SNF). The protein is Leghemoglobin 2 of Lotus japonicus (Lotus corniculatus var. japonicus).